We begin with the raw amino-acid sequence, 1076 residues long: Carbamoyl phosphate synthase large chain (1076 aa).

The carboxyphosphate synthetic domain stretch occupies residues 1–403 (MPKRTDIQSI…SLQKALRGLE (403 aa)). 12 residues coordinate ATP: R129, R169, G175, G176, E208, L210, E215, G241, V242, H243, Q285, and E299. One can recognise an ATP-grasp 1 domain in the interval 133 to 328 (DQAMKRIGLE…IAKIAAKLAV (196 aa)). Q285, E299, and N301 together coordinate Mg(2+). Q285, E299, and N301 together coordinate Mn(2+). An oligomerization domain region spans residues 404-553 (TGNDGLDPKV…YSSYEEECEA (150 aa)). The segment at 554-935 (EVSDRPKIMV…AFYKAQLGAG (382 aa)) is carbamoyl phosphate synthetic domain. Residues 678-869 (QHMVDKLGLK…LAQVAARCMA (192 aa)) enclose the ATP-grasp 2 domain. The ATP site is built by R714, H753, L755, E760, G785, V786, H787, S788, Q828, and E840. Mg(2+) is bound by residues Q828, E840, and N842. Q828, E840, and N842 together coordinate Mn(2+). The MGS-like domain occupies 936-1076 (EAIPALEGER…LQELHAGVSQ (141 aa)). The tract at residues 936-1076 (EAIPALEGER…LQELHAGVSQ (141 aa)) is allosteric domain.

Belongs to the CarB family. Composed of two chains; the small (or glutamine) chain promotes the hydrolysis of glutamine to ammonia, which is used by the large (or ammonia) chain to synthesize carbamoyl phosphate. Tetramer of heterodimers (alpha,beta)4. The cofactor is Mg(2+). Requires Mn(2+) as cofactor.

It carries out the reaction hydrogencarbonate + L-glutamine + 2 ATP + H2O = carbamoyl phosphate + L-glutamate + 2 ADP + phosphate + 2 H(+). The enzyme catalyses hydrogencarbonate + NH4(+) + 2 ATP = carbamoyl phosphate + 2 ADP + phosphate + 2 H(+). It functions in the pathway amino-acid biosynthesis; L-arginine biosynthesis; carbamoyl phosphate from bicarbonate: step 1/1. It participates in pyrimidine metabolism; UMP biosynthesis via de novo pathway; (S)-dihydroorotate from bicarbonate: step 1/3. In terms of biological role, large subunit of the glutamine-dependent carbamoyl phosphate synthetase (CPSase). CPSase catalyzes the formation of carbamoyl phosphate from the ammonia moiety of glutamine, carbonate, and phosphate donated by ATP, constituting the first step of 2 biosynthetic pathways, one leading to arginine and/or urea and the other to pyrimidine nucleotides. The large subunit (synthetase) binds the substrates ammonia (free or transferred from glutamine from the small subunit), hydrogencarbonate and ATP and carries out an ATP-coupled ligase reaction, activating hydrogencarbonate by forming carboxy phosphate which reacts with ammonia to form carbamoyl phosphate. The sequence is that of Carbamoyl phosphate synthase large chain from Halomonas eurihalina.